Consider the following 280-residue polypeptide: Ribosomal RNA small subunit methyltransferase A (280 aa).

His15, Leu17, Gly42, Glu64, Asp89, and Asn109 together coordinate S-adenosyl-L-methionine.

This sequence belongs to the class I-like SAM-binding methyltransferase superfamily. rRNA adenine N(6)-methyltransferase family. RsmA subfamily.

The protein resides in the cytoplasm. It catalyses the reaction adenosine(1518)/adenosine(1519) in 16S rRNA + 4 S-adenosyl-L-methionine = N(6)-dimethyladenosine(1518)/N(6)-dimethyladenosine(1519) in 16S rRNA + 4 S-adenosyl-L-homocysteine + 4 H(+). Functionally, specifically dimethylates two adjacent adenosines (A1518 and A1519) in the loop of a conserved hairpin near the 3'-end of 16S rRNA in the 30S particle. May play a critical role in biogenesis of 30S subunits. The protein is Ribosomal RNA small subunit methyltransferase A of Prochlorococcus marinus (strain MIT 9303).